An 89-amino-acid polypeptide reads, in one-letter code: Small ribosomal subunit protein uS14 (89 aa).

The protein belongs to the universal ribosomal protein uS14 family. As to quaternary structure, part of the 30S ribosomal subunit. Contacts proteins S3 and S10.

Its function is as follows. Binds 16S rRNA, required for the assembly of 30S particles and may also be responsible for determining the conformation of the 16S rRNA at the A site. In Chlorobium phaeovibrioides (strain DSM 265 / 1930) (Prosthecochloris vibrioformis (strain DSM 265)), this protein is Small ribosomal subunit protein uS14.